A 321-amino-acid polypeptide reads, in one-letter code: Ornithine carbamoyltransferase (321 aa).

Carbamoyl phosphate-binding positions include 53–56, Q80, R104, and 131–134; these read STRT and HPCQ. Residues N166, D230, and 234-235 contribute to the L-ornithine site; that span reads SM. Residues 270–271 and R298 each bind carbamoyl phosphate; that span reads CL.

The protein belongs to the aspartate/ornithine carbamoyltransferase superfamily. OTCase family.

Its subcellular location is the cytoplasm. The catalysed reaction is carbamoyl phosphate + L-ornithine = L-citrulline + phosphate + H(+). The protein operates within amino-acid degradation; L-arginine degradation via ADI pathway; carbamoyl phosphate from L-arginine: step 2/2. Reversibly catalyzes the transfer of the carbamoyl group from carbamoyl phosphate (CP) to the N(epsilon) atom of ornithine (ORN) to produce L-citrulline. The protein is Ornithine carbamoyltransferase of Bifidobacterium longum subsp. infantis (strain ATCC 15697 / DSM 20088 / JCM 1222 / NCTC 11817 / S12).